A 282-amino-acid polypeptide reads, in one-letter code: Pantothenate synthetase (282 aa).

An ATP-binding site is contributed by 30–37; that stretch reads MGYLHEGH. The Proton donor role is filled by His-37. Residue Gln-61 coordinates (R)-pantoate. Gln-61 is a binding site for beta-alanine. Residue 147 to 150 coordinates ATP; it reads GQKD. Gln-153 is a (R)-pantoate binding site. ATP contacts are provided by residues Val-176 and 184–187; that span reads LSSR.

The protein belongs to the pantothenate synthetase family. Homodimer.

The protein localises to the cytoplasm. The enzyme catalyses (R)-pantoate + beta-alanine + ATP = (R)-pantothenate + AMP + diphosphate + H(+). The protein operates within cofactor biosynthesis; (R)-pantothenate biosynthesis; (R)-pantothenate from (R)-pantoate and beta-alanine: step 1/1. Its function is as follows. Catalyzes the condensation of pantoate with beta-alanine in an ATP-dependent reaction via a pantoyl-adenylate intermediate. The chain is Pantothenate synthetase from Desulfitobacterium hafniense (strain DSM 10664 / DCB-2).